The primary structure comprises 105 residues: Met repressor (105 aa).

Belongs to the MetJ family. As to quaternary structure, homodimer.

The protein resides in the cytoplasm. In terms of biological role, this regulatory protein, when combined with SAM (S-adenosylmethionine) represses the expression of the methionine regulon and of enzymes involved in SAM synthesis. The protein is Met repressor of Yersinia enterocolitica serotype O:8 / biotype 1B (strain NCTC 13174 / 8081).